Consider the following 589-residue polypeptide: Bifunctional protein TrpGD (589 aa).

The Glutamine amidotransferase type-1 domain occupies 46–241 (RVIVIDNYDS…LNIQDIQVKK (196 aa)). 99–101 (GPG) contacts L-glutamine. Residue Cys126 is the Nucleophile; for GATase activity of the active site. L-glutamine contacts are provided by residues Gln130 and 176-177 (SL). Catalysis depends on for GATase activity residues His215 and Glu217. The anthranilate phosphoribosyltransferase stretch occupies residues 253–589 (ALKKLVEFED…MDYQKTLGNS (337 aa)).

It in the C-terminal section; belongs to the anthranilate phosphoribosyltransferase family. As to quaternary structure, heterotetramer consisting of two non-identical subunits: a beta subunit (TrpG) and a large alpha subunit (TrpE).

The enzyme catalyses chorismate + L-glutamine = anthranilate + pyruvate + L-glutamate + H(+). It carries out the reaction N-(5-phospho-beta-D-ribosyl)anthranilate + diphosphate = 5-phospho-alpha-D-ribose 1-diphosphate + anthranilate. The protein operates within amino-acid biosynthesis; L-tryptophan biosynthesis; L-tryptophan from chorismate: step 1/5. Its pathway is amino-acid biosynthesis; L-tryptophan biosynthesis; L-tryptophan from chorismate: step 2/5. Part of a heterotetrameric complex that catalyzes the two-step biosynthesis of anthranilate, an intermediate in the biosynthesis of L-tryptophan. In the first step, the glutamine-binding beta subunit (TrpG) of anthranilate synthase (AS) provides the glutamine amidotransferase activity which generates ammonia as a substrate that, along with chorismate, is used in the second step, catalyzed by the large alpha subunit of AS (TrpE) to produce anthranilate. In the absence of TrpG, TrpE can synthesize anthranilate directly from chorismate and high concentrations of ammonia. In addition to synthesizing anthranilate, it also catalyzes the second step of the pathway, the transfer of the phosphoribosyl group of 5-phosphorylribose-1-pyrophosphate (PRPP) to anthranilate. In Thermotoga maritima (strain ATCC 43589 / DSM 3109 / JCM 10099 / NBRC 100826 / MSB8), this protein is Bifunctional protein TrpGD (trpGD).